The following is a 163-amino-acid chain: MRIEKCYFCSGPIYPGHGMMFVRNDCKVFRFCKSKCHKNFKKKRNPRKVRWTKAFRKAAGKELTVDNSFEFEKRRNEPVKYQRELWNKTIDAMKRVEEIKQKRQAKFIMNRLKKNKELQKVQDVKEVKQNIHLIRAPLAGKGKQLEDKMVQKLQEDVDMEDVS.

It belongs to the eukaryotic ribosomal protein eL24 family. As to quaternary structure, associated with nucleolar and cytoplasmic pre-60S particles. At the end of biogenesis it dissociates from cytoplasmic pre-60S particles and is likely to be exchanged for its ribosomal homolog, RPL24.

It localises to the nucleus. The protein localises to the nucleolus. Involved in the biogenesis of the 60S ribosomal subunit. Ensures the docking of GTPBP4/NOG1 to pre-60S particles. The protein is Probable ribosome biogenesis protein RLP24 (RSL24D1) of Bos taurus (Bovine).